The primary structure comprises 427 residues: Transcription termination factor Rho (427 aa).

The Rho RNA-BD domain occupies 55 to 130 (YFFGEGVLEI…IKIEAINYRP (76 aa)). ATP contacts are provided by residues 173-178 (GKGQRG), 185-190 (KAGKTT), and arginine 216.

This sequence belongs to the Rho family. In terms of assembly, homohexamer. The homohexamer assembles into an open ring structure.

Its function is as follows. Facilitates transcription termination by a mechanism that involves Rho binding to the nascent RNA, activation of Rho's RNA-dependent ATPase activity, and release of the mRNA from the DNA template. This Thermotoga maritima (strain ATCC 43589 / DSM 3109 / JCM 10099 / NBRC 100826 / MSB8) protein is Transcription termination factor Rho.